Consider the following 132-residue polypeptide: Protein FAM174C (132 aa).

Positions 1 to 26 (MGPRVLQPPLLLLLLALLLAALPCGA) are cleaved as a signal peptide. Residues 34–66 (PAQVTLSPPPAVTNGSQPGAPHNSTHTRPPGAS) are disordered. The segment covering 46–60 (TNGSQPGAPHNSTHT) has biased composition (polar residues). N47 carries N-linked (GlcNAc...) asparagine glycosylation. Residues 73-93 (SFYVILGFCGLTALYFLIRAF) traverse the membrane as a helical segment. T113 carries the post-translational modification Phosphothreonine. The interval 113-132 (TEMASLDSDEETVFESRNLR) is disordered. 2 positions are modified to phosphoserine: S117 and S120.

This sequence belongs to the FAM174 family.

The protein resides in the membrane. This chain is Protein FAM174C, found in Homo sapiens (Human).